The primary structure comprises 455 residues: Acid sphingomyelinase-like phosphodiesterase 3b (455 aa).

Positions 1–18 (MRLLAWLIFLANWGGARA) are cleaved as a signal peptide. Zn(2+) contacts are provided by Asp28 and His30. Residues Cys45 and Cys64 are joined by a disulfide bond. The N-linked (GlcNAc...) asparagine glycan is linked to Asn72. Zn(2+) contacts are provided by Asp93 and Asn134. N-linked (GlcNAc...) asparagine glycosylation is present at Asn164. 3 residues coordinate Zn(2+): His236, His277, and His279. Asn343 is a glycosylation site (N-linked (GlcNAc...) asparagine). Cystine bridges form between Cys405/Cys409 and Cys415/Cys428.

It belongs to the acid sphingomyelinase family. In terms of assembly, interacts with TLR4, TLR7, TLR8 and TLR9. It depends on Zn(2+) as a cofactor. N-glycosylated.

It is found in the secreted. The protein resides in the cell membrane. In terms of biological role, lipid-modulating phosphodiesterase. Active on the surface of macrophages and dendritic cells and strongly influences macrophage lipid composition and membrane fluidity. Acts as a negative regulator of Toll-like receptor signaling. Has in vitro phosphodiesterase activity, but the physiological substrate is unknown. Lacks activity with phosphocholine-containing lipids, but can cleave CDP-choline, and can release phosphate from ATP and ADP (in vitro). In Homo sapiens (Human), this protein is Acid sphingomyelinase-like phosphodiesterase 3b (SMPDL3B).